Here is a 430-residue protein sequence, read N- to C-terminus: Serine--tRNA ligase (430 aa).

Residues 44–65 (TESLQAERNSRSKSIGAAKARG) form a disordered region. 237 to 239 (TAE) serves as a coordination point for L-serine. An ATP-binding site is contributed by 268 to 270 (RSE). Glu-291 is an L-serine binding site. 355–358 (EISS) is a binding site for ATP. Ser-391 is an L-serine binding site.

The protein belongs to the class-II aminoacyl-tRNA synthetase family. Type-1 seryl-tRNA synthetase subfamily. Homodimer. The tRNA molecule binds across the dimer.

It localises to the cytoplasm. It carries out the reaction tRNA(Ser) + L-serine + ATP = L-seryl-tRNA(Ser) + AMP + diphosphate + H(+). The enzyme catalyses tRNA(Sec) + L-serine + ATP = L-seryl-tRNA(Sec) + AMP + diphosphate + H(+). It participates in aminoacyl-tRNA biosynthesis; selenocysteinyl-tRNA(Sec) biosynthesis; L-seryl-tRNA(Sec) from L-serine and tRNA(Sec): step 1/1. Its function is as follows. Catalyzes the attachment of serine to tRNA(Ser). Is also able to aminoacylate tRNA(Sec) with serine, to form the misacylated tRNA L-seryl-tRNA(Sec), which will be further converted into selenocysteinyl-tRNA(Sec). This is Serine--tRNA ligase from Edwardsiella ictaluri (strain 93-146).